We begin with the raw amino-acid sequence, 139 residues long: Gas vesicle protein A (139 aa).

Positions 113–139 are disordered; that stretch reads EKLGDMLTSDEPEPRKATRVRSRRADR. A compositionally biased stretch (basic residues) spans 129 to 139; sequence ATRVRSRRADR.

It belongs to the gas vesicle GvpA family. In terms of assembly, the gas vesicle shell is 2 nm thick and consists of a single layer of this protein. It forms helical ribs nearly perpendicular to the long axis of the vesicle.

The protein localises to the gas vesicle shell. Gas vesicles are hollow, gas filled proteinaceous nanostructures found in some microorganisms. During planktonic growth they allow positioning of the organism at a favorable depth for light or nutrient acquisition. GvpA forms the protein shell. The protein is Gas vesicle protein A of Mycobacterium sp. (strain JLS).